A 518-amino-acid chain; its full sequence is Stage V sporulation protein B (518 aa).

14 helical membrane-spanning segments follow: residues phenylalanine 6–valine 26, methionine 45–isoleucine 65, isoleucine 91–alanine 111, threonine 120–leucine 140, isoleucine 165–alanine 185, glycine 186–phenylalanine 206, tryptophan 250–alanine 270, phenylalanine 281–valine 301, leucine 326–methionine 346, valine 348–leucine 368, alanine 387–alanine 407, serine 411–leucine 431, isoleucine 446–isoleucine 466, and valine 478–phenylalanine 498.

Belongs to the polysaccharide synthase family.

Its subcellular location is the cell membrane. Involved, directly or indirectly, in spore cortex biosynthesis. Affects only indirectly the expression of late sporulation genes. The protein is Stage V sporulation protein B (spoVB) of Bacillus subtilis (strain 168).